The following is a 417-amino-acid chain: Probable serine/threonine-protein kinase WNK9 (417 aa).

The disordered stretch occupies residues 1 to 23 (MDLVEAEAEEQPPDEDGDEEGYV). A Protein kinase domain is found at 32 to 289 (IRYDEIVGSG…ATELLKSSFL (258 aa)). Residues 113-116 (TELF) and lysine 163 contribute to the ATP site. The active-site Proton acceptor is the aspartate 180.

The protein belongs to the protein kinase superfamily. Ser/Thr protein kinase family. WNK subfamily.

It carries out the reaction L-seryl-[protein] + ATP = O-phospho-L-seryl-[protein] + ADP + H(+). It catalyses the reaction L-threonyl-[protein] + ATP = O-phospho-L-threonyl-[protein] + ADP + H(+). This chain is Probable serine/threonine-protein kinase WNK9 (WNK9), found in Oryza sativa subsp. japonica (Rice).